The sequence spans 328 residues: Cytochrome c biogenesis protein CcsA (328 aa).

The next 8 helical transmembrane spans lie at 13-33 (ISFSVVSIVLTIYFFTLLVNL), 46-66 (GIVITFFGITGLLFTRWIYSG), 73-93 (LYESLIFLSWAFSIIHMVSYF), 101-121 (LNAITAPSAIFIQGFATSGLL), 146-166 (MILGYGALLCGSLLSIALLVI), 234-254 (IISLGFIFLTVGILSGAVWAN), 263-283 (WDPKETWAFITWTIFAIYLHI), and 295-315 (AIVASIGFLLIWICYFGVNLL).

The protein belongs to the CcmF/CycK/Ccl1/NrfE/CcsA family. As to quaternary structure, may interact with Ccs1.

It localises to the plastid. The protein resides in the chloroplast thylakoid membrane. Required during biogenesis of c-type cytochromes (cytochrome c6 and cytochrome f) at the step of heme attachment. This is Cytochrome c biogenesis protein CcsA from Barbarea verna (Land cress).